The primary structure comprises 372 residues: MSNKDIRVVVGMSGGVDSSVTAHVLKEQGYDVIGIFMKNWDDTDENGVCTATEDYNDVIEVCNQIGIPYYAVNFEKEYWDKVFTYFLDEYKKGRTPNPDVMCNKEIKFKAFLDHAMNLGADYVATGHYARIHRHEDGHVEMLRGVDNNKDQTYFLNQLSQQQLSKVMFPIGDIEKIEVRRIAEEQGLVTAKKKDSTGICFIGEKNFKTFLSQYLPAQPGDMITLDGKKMGKHSGLMYYTIGQRHGLGIGGDGDPWFVVGKNLKDNVLYVEQGFHHDALYSDYLIASDYSFVNPEDNDLDQGFECTAKFRYRQKDTKVFVKRENDHALRVTFAEPVRAITPGQAVVFYQGDVCLGGATIDDVFKNEGQLNYVV.

ATP is bound by residues 11–18 (GMSGGVDS) and Met37. The segment at 97–99 (NPD) is interaction with target base in tRNA. Cys102 functions as the Nucleophile in the catalytic mechanism. Cys102 and Cys199 are joined by a disulfide. ATP is bound at residue Gly126. Residues 149-151 (KDQ) are interaction with tRNA. Residue Cys199 is the Cysteine persulfide intermediate of the active site. Positions 309–310 (RY) are interaction with tRNA.

This sequence belongs to the MnmA/TRMU family.

It localises to the cytoplasm. It carries out the reaction S-sulfanyl-L-cysteinyl-[protein] + uridine(34) in tRNA + AH2 + ATP = 2-thiouridine(34) in tRNA + L-cysteinyl-[protein] + A + AMP + diphosphate + H(+). Functionally, catalyzes the 2-thiolation of uridine at the wobble position (U34) of tRNA, leading to the formation of s(2)U34. The sequence is that of tRNA-specific 2-thiouridylase MnmA from Staphylococcus aureus (strain MSSA476).